The following is a 146-amino-acid chain: Arginine vasopressin-induced protein 1 (146 aa).

2 disordered regions span residues 1 to 31 and 80 to 146; these read MGTPASVVSEPPLWQVSTAQPRDRGRGRKQA and RRKR…QIRH. Positions 80–92 are enriched in basic residues; the sequence is RRKRPPRQNHCSR. Positions 106–123 are enriched in polar residues; sequence QASTTDTASSEQFGNSRR.

In terms of biological role, may be involved in MAP kinase activation, epithelial sodium channel (ENaC) down-regulation and cell cycling. This is Arginine vasopressin-induced protein 1 (Avpi1) from Rattus norvegicus (Rat).